Reading from the N-terminus, the 579-residue chain is V-type ATP synthase alpha chain (579 aa).

227 to 234 (GGFGTGKT) is an ATP binding site.

This sequence belongs to the ATPase alpha/beta chains family.

The catalysed reaction is ATP + H2O + 4 H(+)(in) = ADP + phosphate + 5 H(+)(out). Functionally, produces ATP from ADP in the presence of a proton gradient across the membrane. The V-type alpha chain is a catalytic subunit. The sequence is that of V-type ATP synthase alpha chain from Anaeromyxobacter sp. (strain K).